We begin with the raw amino-acid sequence, 758 residues long: Probable adenosylcobalamin-dependent ribonucleoside-triphosphate reductase (758 aa).

Cysteines 194 and 459 form a disulfide. The tract at residues 233–256 is disordered; it reads IIIKGQLPPPPPQQQPQQQQQQHG. Catalysis depends on residues cysteine 448 and glutamate 450.

It belongs to the class II ribonucleoside-triphosphate reductase family. Monomer. Requires adenosylcob(III)alamin as cofactor.

The catalysed reaction is a 2'-deoxyribonucleoside 5'-triphosphate + [thioredoxin]-disulfide + H2O = a ribonucleoside 5'-triphosphate + [thioredoxin]-dithiol. This is Probable adenosylcobalamin-dependent ribonucleoside-triphosphate reductase (rtpR) from Dictyostelium discoideum (Social amoeba).